The sequence spans 91 residues: Acylphosphatase (91 aa).

Positions 3–89 (TLLVRISGKV…PDQPGFSQKP (87 aa)) constitute an Acylphosphatase-like domain. Catalysis depends on residues Arg18 and Asn36.

Belongs to the acylphosphatase family.

It catalyses the reaction an acyl phosphate + H2O = a carboxylate + phosphate + H(+). The protein is Acylphosphatase (acyP) of Rhodospirillum rubrum (strain ATCC 11170 / ATH 1.1.1 / DSM 467 / LMG 4362 / NCIMB 8255 / S1).